The sequence spans 375 residues: Eukaryotic translation initiation factor 3 subunit M (375 aa).

The PCI domain occupies 180 to 339 (AAAKVMVELL…RKVVVSHSTH (160 aa)).

This sequence belongs to the eIF-3 subunit M family. As to quaternary structure, component of the eukaryotic translation initiation factor 3 (eIF-3) complex, which is composed of 13 subunits: eif3a, eif3b, eif3c, eif3d, eif3e, eif3f, eif3g, eif3h, eif3i, eif3j, eif3k, eif3l and eif3m.

The protein resides in the cytoplasm. Its function is as follows. Component of the eukaryotic translation initiation factor 3 (eIF-3) complex, which is involved in protein synthesis of a specialized repertoire of mRNAs and, together with other initiation factors, stimulates binding of mRNA and methionyl-tRNAi to the 40S ribosome. The eIF-3 complex specifically targets and initiates translation of a subset of mRNAs involved in cell proliferation. This Danio rerio (Zebrafish) protein is Eukaryotic translation initiation factor 3 subunit M (eif3m).